A 723-amino-acid polypeptide reads, in one-letter code: UPF0313 protein YgiQ (723 aa).

Residues 372–650 (AYEMIRFSIN…KALLRYHDPA (279 aa)) form the Radical SAM core domain. Cysteine 386, cysteine 390, and cysteine 393 together coordinate [4Fe-4S] cluster. Positions 686 to 723 (EARRQNRNTRPALTKHTPVEHQRQGLAANKKRGKGAGR) are disordered. Residues 714 to 723 (NKKRGKGAGR) show a composition bias toward basic residues.

It belongs to the UPF0313 family. Requires [4Fe-4S] cluster as cofactor.

This is UPF0313 protein YgiQ from Salmonella typhimurium (strain LT2 / SGSC1412 / ATCC 700720).